The chain runs to 425 residues: Alpha-N-acetylgalactosaminidase (425 aa).

NAD(+) contacts are provided by residues 29-30 (NR), Glu-51, 99-102 (WLTH), 119-120 (EV), and Asn-148. Tyr-177 is a substrate binding site. NAD(+) contacts are provided by residues 194–198 (FHNHW) and Tyr-211. Residues 211–214 (YPTH) and Tyr-293 each bind substrate.

It belongs to the Gfo/Idh/MocA family. Glycosyl hydrolase 109 subfamily. It depends on NAD(+) as a cofactor.

It catalyses the reaction Cleavage of non-reducing alpha-(1-&gt;3)-N-acetylgalactosamine residues from human blood group A and AB mucin glycoproteins, Forssman hapten and blood group A lacto series glycolipids.. In terms of biological role, glycosidase that has specific alpha-N-acetylgalactosaminidase activity. The sequence is that of Alpha-N-acetylgalactosaminidase from Bacteroides fragilis (strain ATCC 25285 / DSM 2151 / CCUG 4856 / JCM 11019 / LMG 10263 / NCTC 9343 / Onslow / VPI 2553 / EN-2).